Reading from the N-terminus, the 684-residue chain is Cleavage and polyadenylation specificity factor subunit 3 (684 aa).

An N-acetylserine modification is found at serine 2. Positions 71, 73, 75, 76, 158, and 179 each coordinate Zn(2+). The active-site Proton donor is the histidine 396. Residue histidine 418 participates in Zn(2+) binding. Glycyl lysine isopeptide (Lys-Gly) (interchain with G-Cter in SUMO) cross-links involve residues lysine 462, lysine 465, and lysine 545. Position 659 is a phosphoserine (serine 659). Position 681 is a phosphothreonine (threonine 681).

This sequence belongs to the metallo-beta-lactamase superfamily. RNA-metabolizing metallo-beta-lactamase-like family. CPSF3 subfamily. Component of the cleavage and polyadenylation specificity factor (CPSF) complex, composed of CPSF1, CPSF2, CPSF3, CPSF4 and FIP1L1. Interacts with CPSF2, CSTF2 and SYMPK. Interacts with TUT1; the interaction is direct and mediates the recruitment of the CPSF complex on the 3'UTR of pre-mRNAs. Interacts with WDR33. Interacts with ZC3H3. Interacts with ISY1; this interaction is in an RNA independent manner. Interacts with the microprocessor complex subunits DGCR8 and DROSHA; this interaction is in an RNA dependent manner. It depends on Zn(2+) as a cofactor. Sumoylated on Lys-462, Lys-465 and Lys-545, preferentially by SUMO3.

The protein resides in the nucleus. Functionally, component of the cleavage and polyadenylation specificity factor (CPSF) complex that plays a key role in pre-mRNA 3'-end formation, recognizing the AAUAAA signal sequence and interacting with poly(A) polymerase and other factors to bring about cleavage and poly(A) addition. Has endonuclease activity, and functions as an mRNA 3'-end-processing endonuclease. Also involved in the histone 3'-end pre-mRNA processing. U7 snRNP-dependent protein that induces both the 3' endoribonucleolytic cleavage of histone pre-mRNAs and acts as a 5' to 3' exonuclease for degrading the subsequent downstream cleavage product (DCP) of mature histone mRNAs. Cleavage occurs after the 5'-ACCCA-3' sequence in the histone pre-mRNA leaving a 3'hydroxyl group on the upstream fragment containing the stem loop (SL) and 5' phosphate on the downstream cleavage product (DCP) starting with CU nucleotides. The U7-dependent 5' to 3' exonuclease activity is processive and degrades the DCP RNA substrate even after complete removal of the U7-binding site. Binds to the downstream cleavage product (DCP) of histone pre-mRNAs and the cleaved DCP RNA substrate in a U7 snRNP dependent manner. Required for the selective processing of microRNAs (miRNAs) during embryonic stem cell differentiation via its interaction with ISY1. Required for entering/progressing through S-phase of the cell cycle. Required for the biogenesis of all miRNAs from the pri-miR-17-92 primary transcript except miR-92a. Only required for the biogenesis of miR-290 and miR-96 from the pri-miR-290-295 and pri-miR-96-183 primary transcripts, respectively. The sequence is that of Cleavage and polyadenylation specificity factor subunit 3 (Cpsf3) from Mus musculus (Mouse).